A 253-amino-acid polypeptide reads, in one-letter code: tRNA (guanine-N(7)-)-methyltransferase (253 aa).

Residues 1-12 (MSQTPMPQPDQA) show a composition bias toward pro residues. Residues 1-39 (MSQTPMPQPDQAPPVDVGQPVDEAEAKRRRFKTHGRKKG) are disordered. The segment covering 27–39 (KRRRFKTHGRKKG) has biased composition (basic residues). S-adenosyl-L-methionine is bound by residues E84, D109, N136, and D159. D159 is an active-site residue. Residues K163, D195, and 232 to 235 (TNFE) each bind substrate.

It belongs to the class I-like SAM-binding methyltransferase superfamily. TrmB family.

It carries out the reaction guanosine(46) in tRNA + S-adenosyl-L-methionine = N(7)-methylguanosine(46) in tRNA + S-adenosyl-L-homocysteine. Its pathway is tRNA modification; N(7)-methylguanine-tRNA biosynthesis. Functionally, catalyzes the formation of N(7)-methylguanine at position 46 (m7G46) in tRNA. This chain is tRNA (guanine-N(7)-)-methyltransferase, found in Magnetococcus marinus (strain ATCC BAA-1437 / JCM 17883 / MC-1).